Consider the following 106-residue polypeptide: UPF0145 protein BDI_2732 (106 aa).

Belongs to the UPF0145 family.

In Parabacteroides distasonis (strain ATCC 8503 / DSM 20701 / CIP 104284 / JCM 5825 / NCTC 11152), this protein is UPF0145 protein BDI_2732.